The following is a 163-amino-acid chain: Large ribosomal subunit protein uL10 (163 aa).

This sequence belongs to the universal ribosomal protein uL10 family. In terms of assembly, part of the ribosomal stalk of the 50S ribosomal subunit. The N-terminus interacts with L11 and the large rRNA to form the base of the stalk. The C-terminus forms an elongated spine to which L12 dimers bind in a sequential fashion forming a multimeric L10(L12)X complex.

Its function is as follows. Forms part of the ribosomal stalk, playing a central role in the interaction of the ribosome with GTP-bound translation factors. This chain is Large ribosomal subunit protein uL10, found in Actinobacillus pleuropneumoniae serotype 5b (strain L20).